The following is a 203-amino-acid chain: Ribosomal RNA small subunit methyltransferase G (203 aa).

S-adenosyl-L-methionine-binding positions include Gly-73, Leu-78, Val-124 to Glu-125, and Arg-138.

The protein belongs to the methyltransferase superfamily. RNA methyltransferase RsmG family.

It is found in the cytoplasm. The catalysed reaction is guanosine(527) in 16S rRNA + S-adenosyl-L-methionine = N(7)-methylguanosine(527) in 16S rRNA + S-adenosyl-L-homocysteine. In terms of biological role, specifically methylates the N7 position of guanine in position 527 of 16S rRNA. The sequence is that of Ribosomal RNA small subunit methyltransferase G from Haemophilus ducreyi (strain 35000HP / ATCC 700724).